Here is a 120-residue protein sequence, read N- to C-terminus: Large ribosomal subunit protein bL19c (120 aa).

Belongs to the bacterial ribosomal protein bL19 family.

It localises to the plastid. Its subcellular location is the chloroplast. In Trieres chinensis (Marine centric diatom), this protein is Large ribosomal subunit protein bL19c (rpl19).